The primary structure comprises 906 residues: Protein translocase subunit SecA (906 aa).

ATP contacts are provided by residues glutamine 89, 107-111 (GEGKT), and aspartate 502. The disordered stretch occupies residues 829–898 (EAPPEPELPP…ACPCGSGKKY (70 aa)). Residues 858–877 (WSDHQHDERNVPAAERDPAD) are compositionally biased toward basic and acidic residues. Residues cysteine 890, cysteine 892, cysteine 901, and histidine 902 each coordinate Zn(2+).

The protein belongs to the SecA family. In terms of assembly, monomer and homodimer. Part of the essential Sec protein translocation apparatus which comprises SecA, SecYEG and auxiliary proteins SecDF-YajC and YidC. Zn(2+) serves as cofactor.

Its subcellular location is the cell inner membrane. The protein localises to the cytoplasm. The catalysed reaction is ATP + H2O + cellular proteinSide 1 = ADP + phosphate + cellular proteinSide 2.. Functionally, part of the Sec protein translocase complex. Interacts with the SecYEG preprotein conducting channel. Has a central role in coupling the hydrolysis of ATP to the transfer of proteins into and across the cell membrane, serving both as a receptor for the preprotein-SecB complex and as an ATP-driven molecular motor driving the stepwise translocation of polypeptide chains across the membrane. The protein is Protein translocase subunit SecA of Brucella anthropi (strain ATCC 49188 / DSM 6882 / CCUG 24695 / JCM 21032 / LMG 3331 / NBRC 15819 / NCTC 12168 / Alc 37) (Ochrobactrum anthropi).